A 259-amino-acid chain; its full sequence is Protein LEAD-SENSITIVE 1 (259 aa).

Residues 20 to 168 (YSWRTAYIYA…CKTALLVLEG (149 aa)) form the LRAT domain. Residues H30 and H42 contribute to the active site. C152 functions as the Acyl-thioester intermediate in the catalytic mechanism.

In terms of tissue distribution, highly expressed in inflorescences, siliques and stems, and, to a lower extent, in roots and leaves.

It is found in the cytoplasm. In terms of biological role, confers tolerance to lead ions (Pb) stress mediated by Pb(NO(3))(2) probably by promoting Pb accumulation leading to subsequent glutathione-dependent phytochelatin (PC) synthesis and related gene expression, including PDR12/ABCG40, GSH1, GSH2, GR1, GR2, PCS1 and PCS2. This is Protein LEAD-SENSITIVE 1 from Arabidopsis thaliana (Mouse-ear cress).